Here is a 130-residue protein sequence, read N- to C-terminus: Small ribosomal subunit protein uS8 (130 aa).

Belongs to the universal ribosomal protein uS8 family. In terms of assembly, part of the 30S ribosomal subunit.

Functionally, one of the primary rRNA binding proteins, it binds directly to 16S rRNA central domain where it helps coordinate assembly of the platform of the 30S subunit. The protein is Small ribosomal subunit protein uS8 of Methanococcoides burtonii (strain DSM 6242 / NBRC 107633 / OCM 468 / ACE-M).